Reading from the N-terminus, the 289-residue chain is Protease HtpX (289 aa).

Transmembrane regions (helical) follow at residues 5–25 and 33–53; these read IVLF…VMSL and MSGL…ISLL. His140 provides a ligand contact to Zn(2+). The active site involves Glu141. His144 contacts Zn(2+). Transmembrane regions (helical) follow at residues 155–175 and 193–213; these read LLQG…GGFI and GIVL…TMWF. A Zn(2+)-binding site is contributed by Glu218.

It belongs to the peptidase M48B family. Zn(2+) is required as a cofactor.

Its subcellular location is the cell inner membrane. The chain is Protease HtpX from Xylella fastidiosa (strain M23).